The following is a 273-amino-acid chain: Large ribosomal subunit protein uL2 (273 aa).

The interval 223 to 273 (VVMNPVDHPMGGGEGRSSGGRHPCTPWGVPTKGHKTRSNKSTDKYIVKRRG) is disordered. Over residues 262–273 (KSTDKYIVKRRG) the composition is skewed to basic and acidic residues.

This sequence belongs to the universal ribosomal protein uL2 family. Part of the 50S ribosomal subunit. Forms a bridge to the 30S subunit in the 70S ribosome.

One of the primary rRNA binding proteins. Required for association of the 30S and 50S subunits to form the 70S ribosome, for tRNA binding and peptide bond formation. It has been suggested to have peptidyltransferase activity; this is somewhat controversial. Makes several contacts with the 16S rRNA in the 70S ribosome. The polypeptide is Large ribosomal subunit protein uL2 (Syntrophus aciditrophicus (strain SB)).